Reading from the N-terminus, the 345-residue chain is Baculoviral IAP repeat-containing protein 7-B (345 aa).

2 BIR repeats span residues 46 to 112 (RQRS…PFLQ) and 154 to 219 (RLGS…DFLL). Residues Cys188, Cys191, His208, and Cys215 each coordinate Zn(2+). Ser237 carries the phosphoserine modification. At Ser241 the chain carries Phosphoserine; by MAPK1. Position 253 is a phosphoserine (Ser253). Ser257 carries the phosphoserine; by MAPK1 modification. The interval 258–286 (TESVSVPRAPTPGERSEPPKVSGPPLSTE) is disordered. An RING-type zinc finger spans residues 298–333 (CKVCMDKDVSMLFVPCGHLVVCTECAPNLRHCPICR).

This sequence belongs to the IAP family. Auto-ubiquitinated, and degraded in a 2-step mechanism; a caspase-independent first step and a caspase-dependent second step. In terms of processing, phosphorylated via MAPK-dependent and CDK-dependent pathways during oocyte maturation. Phosphorylation does not appear to affect caspase inhibition or autoubiquitination activity.

It localises to the cytoplasm. The enzyme catalyses S-ubiquitinyl-[E2 ubiquitin-conjugating enzyme]-L-cysteine + [acceptor protein]-L-lysine = [E2 ubiquitin-conjugating enzyme]-L-cysteine + N(6)-ubiquitinyl-[acceptor protein]-L-lysine.. Weak apoptotic suppressor. Has E3 ubiquitin-protein ligase activity. Weak inhibitor of caspase activity. This Xenopus laevis (African clawed frog) protein is Baculoviral IAP repeat-containing protein 7-B (birc7-b).